We begin with the raw amino-acid sequence, 53 residues long: Metallothionein (53 aa).

Positions 1 to 6 are excised as a propeptide; it reads MRVIRM. Cu(+) contacts are provided by C17, H19, C22, C24, C32, H33, C34, C43, and C45.

Belongs to the metallothionein superfamily.

Metallothioneins are small proteins that have a high content of cysteine residues which allow them to bind heavy metal ions through clusters of thiolate bonds. MymT binds up to seven ions of Cu(+), with a preference for four to six Cu(+) ions, in a solvent-shielded core. MymT protects M.tuberculosis from copper toxicity. The chain is Metallothionein (mymT) from Mycobacterium tuberculosis (strain CDC 1551 / Oshkosh).